Reading from the N-terminus, the 471-residue chain is Casein kinase 1-like protein 9 (471 aa).

The 270-residue stretch at 9–278 (FKLGRKIGSG…LKRLFRDLFI (270 aa)) folds into the Protein kinase domain. ATP is bound by residues 15-23 (IGSGSFGEL) and K38. Catalysis depends on D128, which acts as the Proton acceptor. The segment at 300–471 (SSSGSSSRTR…RSLELLTLRK (172 aa)) is disordered. Over residues 325–339 (EKQERIAGKETRENR) the composition is skewed to basic and acidic residues. Over residues 385 to 430 (SSRYGSSSRRAIPSSSRPSSAGGPSDSRSSSRLVTSTGGVGTVSNR) the composition is skewed to low complexity. The segment covering 431-449 (ASTSQRIQAGNESRTSSFS) has biased composition (polar residues). A compositionally biased stretch (basic and acidic residues) spans 454–464 (NTREDPLRRSL).

This sequence belongs to the protein kinase superfamily. CK1 Ser/Thr protein kinase family. Casein kinase I subfamily. Monomer. Autophosphorylated on serine, threonine and tyrosine residues. In terms of tissue distribution, expressed in leaves, stems and flowers.

It is found in the cytoplasm. Its subcellular location is the nucleus. It carries out the reaction L-seryl-[protein] + ATP = O-phospho-L-seryl-[protein] + ADP + H(+). The catalysed reaction is L-threonyl-[protein] + ATP = O-phospho-L-threonyl-[protein] + ADP + H(+). Functionally, casein kinases are operationally defined by their preferential utilization of acidic proteins such as caseins as substrates. Can phosphorylate casein on serine and threonine residues, and poly(Glu,Tyr) in vitro. This chain is Casein kinase 1-like protein 9, found in Arabidopsis thaliana (Mouse-ear cress).